The following is a 560-amino-acid chain: DNA ligase B (560 aa).

The N6-AMP-lysine intermediate role is filled by lysine 124.

The protein belongs to the NAD-dependent DNA ligase family. LigB subfamily.

It catalyses the reaction NAD(+) + (deoxyribonucleotide)n-3'-hydroxyl + 5'-phospho-(deoxyribonucleotide)m = (deoxyribonucleotide)n+m + AMP + beta-nicotinamide D-nucleotide.. Its function is as follows. Catalyzes the formation of phosphodiester linkages between 5'-phosphoryl and 3'-hydroxyl groups in double-stranded DNA using NAD as a coenzyme and as the energy source for the reaction. The protein is DNA ligase B of Citrobacter koseri (strain ATCC BAA-895 / CDC 4225-83 / SGSC4696).